The primary structure comprises 125 residues: Steroid Delta-isomerase (125 aa).

Tyr14 acts as the Proton donor in catalysis. Asp38 serves as the catalytic Proton acceptor. Asp99 provides a ligand contact to substrate.

As to quaternary structure, homodimer.

It catalyses the reaction a 3-oxo-Delta(5)-steroid = a 3-oxo-Delta(4)-steroid. This chain is Steroid Delta-isomerase (ksi), found in Comamonas testosteroni (Pseudomonas testosteroni).